A 406-amino-acid polypeptide reads, in one-letter code: S-adenosylmethionine synthase (406 aa).

140-145 lines the ATP pocket; sequence GRGSVD.

This sequence belongs to the AdoMet synthase 2 family. It depends on Mg(2+) as a cofactor.

It carries out the reaction L-methionine + ATP + H2O = S-adenosyl-L-methionine + phosphate + diphosphate. The protein operates within amino-acid biosynthesis; S-adenosyl-L-methionine biosynthesis; S-adenosyl-L-methionine from L-methionine: step 1/1. Catalyzes the formation of S-adenosylmethionine from methionine and ATP. The sequence is that of S-adenosylmethionine synthase (mat) from Aeropyrum pernix (strain ATCC 700893 / DSM 11879 / JCM 9820 / NBRC 100138 / K1).